The chain runs to 465 residues: DEAD-box ATP-dependent RNA helicase 55 (465 aa).

Residues 17–45 carry the Q motif motif; that stretch reads FSELKPPLSEDIIEALDRSGFEVCTPVQA. A Helicase ATP-binding domain is found at 48 to 219; it reads IPFLCSHKDV…KAGLRNPYLK (172 aa). 61–68 lines the ATP pocket; the sequence is AATGSGKT. The DEAD box signature appears at 167–170; sequence DEAD. Residues 228 to 422 enclose the Helicase C-terminal domain; that stretch reads QLVHLLIENK…KDKLQQEKRG (195 aa). Residues 413 to 465 form a disordered region; the sequence is KDKLQQEKRGKRKKSSKEAVDDSNKASRKRKLTGRQRQTIQTAQDEEEMNLRL. Residues 428–437 are compositionally biased toward basic and acidic residues; it reads SKEAVDDSNK. Positions 456-465 are enriched in acidic residues; sequence QDEEEMNLRL.

The protein belongs to the DEAD box helicase family. DDX55/SPB4 subfamily.

It carries out the reaction ATP + H2O = ADP + phosphate + H(+). The sequence is that of DEAD-box ATP-dependent RNA helicase 55 (RH55) from Arabidopsis thaliana (Mouse-ear cress).